The chain runs to 234 residues: Purine nucleoside phosphorylase DeoD-type (234 aa).

His-4 contributes to the a purine D-ribonucleoside binding site. Residues Gly-20, Arg-24, Arg-43, and 87-90 contribute to the phosphate site; that span reads RVGT. A purine D-ribonucleoside is bound by residues Glu-162, 178 to 180, and 202 to 203; these read EME and SD. Asp-203 acts as the Proton donor in catalysis.

It belongs to the PNP/UDP phosphorylase family. In terms of assembly, homohexamer; trimer of homodimers.

It carries out the reaction a purine D-ribonucleoside + phosphate = a purine nucleobase + alpha-D-ribose 1-phosphate. The catalysed reaction is a purine 2'-deoxy-D-ribonucleoside + phosphate = a purine nucleobase + 2-deoxy-alpha-D-ribose 1-phosphate. In terms of biological role, catalyzes the reversible phosphorolytic breakdown of the N-glycosidic bond in the beta-(deoxy)ribonucleoside molecules, with the formation of the corresponding free purine bases and pentose-1-phosphate. Functionally, cleavage of adenosine and its derivatives. This Geobacillus stearothermophilus (Bacillus stearothermophilus) protein is Purine nucleoside phosphorylase DeoD-type.